Reading from the N-terminus, the 207-residue chain is Large ribosomal subunit protein uL4 (207 aa).

Residues 45 to 57 (RQGTHSVKNRSTV) show a composition bias toward polar residues. The tract at residues 45 to 77 (RQGTHSVKNRSTVSGGGRKPWRQKGTGNARQGS) is disordered.

This sequence belongs to the universal ribosomal protein uL4 family. As to quaternary structure, part of the 50S ribosomal subunit.

One of the primary rRNA binding proteins, this protein initially binds near the 5'-end of the 23S rRNA. It is important during the early stages of 50S assembly. It makes multiple contacts with different domains of the 23S rRNA in the assembled 50S subunit and ribosome. In terms of biological role, forms part of the polypeptide exit tunnel. This chain is Large ribosomal subunit protein uL4, found in Oenococcus oeni (strain ATCC BAA-331 / PSU-1).